Here is a 173-residue protein sequence, read N- to C-terminus: C-phycocyanin beta subunit (173 aa).

N73 is modified (N4-methylasparagine). Residues C83 and C154 each coordinate (2R,3E)-phycocyanobilin.

It belongs to the phycobiliprotein family. As to quaternary structure, heterodimer of an alpha and a beta subunit, which further assembles into trimers and the trimers into hexamers. Contains two covalently linked bilin chromophores.

Its subcellular location is the cellular thylakoid membrane. Its function is as follows. Light-harvesting photosynthetic bile pigment-protein from the phycobiliprotein complex (phycobilisome, PBS). Phycocyanin is the major phycobiliprotein in the PBS rod. The polypeptide is C-phycocyanin beta subunit (cpcB1) (Synechococcus elongatus (strain ATCC 33912 / PCC 7942 / FACHB-805) (Anacystis nidulans R2)).